Here is a 180-residue protein sequence, read N- to C-terminus: Translation initiation factor IF-3 (180 aa).

It belongs to the IF-3 family. As to quaternary structure, monomer.

The protein localises to the cytoplasm. Its function is as follows. IF-3 binds to the 30S ribosomal subunit and shifts the equilibrium between 70S ribosomes and their 50S and 30S subunits in favor of the free subunits, thus enhancing the availability of 30S subunits on which protein synthesis initiation begins. The protein is Translation initiation factor IF-3 of Shewanella baltica (strain OS223).